A 622-amino-acid polypeptide reads, in one-letter code: Iron transport multicopper oxidase FET5 (622 aa).

A signal peptide spans 1-18; that stretch reads MLFYSFVWSVLAASVALA. Residues 19 to 573 lie on the Extracellular side of the membrane; it reads KTHKLNYTAS…PKGFTTEGYL (555 aa). Residue asparagine 24 is glycosylated (N-linked (GlcNAc...) asparagine). Plastocyanin-like domains follow at residues 43-146 and 192-301; these read IGFN…FIIH and NILF…IQMR. The Cu cation site is built by histidine 79 and histidine 81. Residues asparagine 86 and asparagine 115 are each glycosylated (N-linked (GlcNAc...) asparagine). Cu cation-binding residues include histidine 128 and histidine 130. N-linked (GlcNAc...) asparagine glycosylation is found at asparagine 196, asparagine 200, asparagine 246, asparagine 295, and asparagine 364. One can recognise a Plastocyanin-like 3 domain in the interval 392-514; sequence GDNINAQLLK…QGLASVFIEA (123 aa). 3 residues coordinate Cu cation: histidine 418, histidine 421, and histidine 423. N-linked (GlcNAc...) asparagine glycosylation occurs at asparagine 455. Residues histidine 496, cysteine 497, histidine 498, and histidine 502 each contribute to the Cu cation site. Residues 574-594 form a helical membrane-spanning segment; it reads ALIISTIIGVWGLYSIAQYGI. The Cytoplasmic portion of the chain corresponds to 595-622; sequence GEVIPNDEKVYHTLREILAENEIEVSRG.

Belongs to the multicopper oxidase family. Interacts with FTH1. Cu cation is required as a cofactor.

It is found in the cell membrane. Its function is as follows. Iron transport multicopper oxidase, which is required for Fe(2+) high affinity uptake. May be required to oxidize Fe(2+) and release it from the transporter. Essential component of copper-dependent iron transport. This chain is Iron transport multicopper oxidase FET5 (FET5), found in Saccharomyces cerevisiae (strain ATCC 204508 / S288c) (Baker's yeast).